A 297-amino-acid chain; its full sequence is Glycine--tRNA ligase alpha subunit (297 aa).

Belongs to the class-II aminoacyl-tRNA synthetase family. Tetramer of two alpha and two beta subunits.

Its subcellular location is the cytoplasm. The catalysed reaction is tRNA(Gly) + glycine + ATP = glycyl-tRNA(Gly) + AMP + diphosphate. This is Glycine--tRNA ligase alpha subunit (glyQ) from Halalkalibacterium halodurans (strain ATCC BAA-125 / DSM 18197 / FERM 7344 / JCM 9153 / C-125) (Bacillus halodurans).